Consider the following 417-residue polypeptide: UDP-N-acetylglucosamine 1-carboxyvinyltransferase (417 aa).

22-23 (KN) lines the phosphoenolpyruvate pocket. Residue arginine 92 coordinates UDP-N-acetyl-alpha-D-glucosamine. Cysteine 116 serves as the catalytic Proton donor. The residue at position 116 (cysteine 116) is a 2-(S-cysteinyl)pyruvic acid O-phosphothioketal. UDP-N-acetyl-alpha-D-glucosamine is bound by residues aspartate 304 and isoleucine 326.

It belongs to the EPSP synthase family. MurA subfamily.

The protein localises to the cytoplasm. The catalysed reaction is phosphoenolpyruvate + UDP-N-acetyl-alpha-D-glucosamine = UDP-N-acetyl-3-O-(1-carboxyvinyl)-alpha-D-glucosamine + phosphate. It functions in the pathway cell wall biogenesis; peptidoglycan biosynthesis. Its function is as follows. Cell wall formation. Adds enolpyruvyl to UDP-N-acetylglucosamine. This is UDP-N-acetylglucosamine 1-carboxyvinyltransferase from Desulforapulum autotrophicum (strain ATCC 43914 / DSM 3382 / VKM B-1955 / HRM2) (Desulfobacterium autotrophicum).